The primary structure comprises 391 residues: Tumor susceptibility gene 101 protein (391 aa).

Ala2 carries the post-translational modification N-acetylalanine. One can recognise a UEV domain in the interval 2–145 (AVSESQLKKM…GEEPPVFSRP (144 aa)). The interaction with CEP55 stretch occupies residues 159–163 (PPNTS). Residues 195 to 222 (GPYPATTSSQYPSQPPVTTAGPSRDGTI) form a disordered region. A compositionally biased stretch (polar residues) spans 200-215 (TTSSQYPSQPPVTTAG). Residue Thr221 is modified to Phosphothreonine. The stretch at 238-317 (KLRWRMKEEM…NQSENNDIDE (80 aa)) forms a coiled coil. The PTAP motif motif lies at 321–324 (PTAP). In terms of domain architecture, SB spans 323-391 (APLYKQILNL…RKTAGLSDLY (69 aa)).

This sequence belongs to the ubiquitin-conjugating enzyme family. UEV subfamily. As to quaternary structure, component of the ESCRT-I complex (endosomal sorting complex required for transport I) which consists of TSG101, VPS28, a VPS37 protein (VPS37A to -D) and MVB12A or MVB12B in a 1:1:1:1 stoichiometry. Interacts with VPS37A, VPS37B and VPS37C. Interacts with DMAP1. Interacts with ubiquitin. Interacts with AATF. Interacts with stathmin and GMCL. Component of an ESCRT-I complex (endosomal sorting complex required for transport I) which consists of TSG101, VPS28, VPS37A and UBAP1 in a 1:1:1:1 stoichiometry. Interacts with HGS; the interaction mediates the association with the ESCRT-0 complex. Interacts with GGA1 and GGA3. Interacts (via UEV domain) with PDCD6IP/AIP1. Interacts with VPS28, SNF8 and VPS36. Self-associates. Interacts with MVB12A; the association appears to be mediated by the TSG101-VPS37 binary subcomplex. Interacts with VPS37D. Interacts with LRSAM1. Interacts with CEP55; the interaction is required for cytokinesis. Interacts with PDCD6. Interacts with LITAF. Interacts with MGRN1. Interacts with ARRDC1; recruits TSG101 to the plasma membrane. In terms of processing, monoubiquitinated at multiple sites by LRSAM1 and by MGRN1. Ubiquitination inactivates it, possibly by regulating its shuttling between an active membrane-bound protein and an inactive soluble form. Ubiquitination by MGRN1 requires the presence of UBE2D1.

Its subcellular location is the cytoplasm. It is found in the early endosome membrane. It localises to the late endosome membrane. The protein localises to the cytoskeleton. The protein resides in the microtubule organizing center. Its subcellular location is the centrosome. It is found in the midbody. It localises to the midbody ring. The protein localises to the nucleus. Its function is as follows. Component of the ESCRT-I complex, a regulator of vesicular trafficking process. Binds to ubiquitinated cargo proteins and is required for the sorting of endocytic ubiquitinated cargos into multivesicular bodies (MVBs). Mediates the association between the ESCRT-0 and ESCRT-I complex. Required for completion of cytokinesis; the function requires CEP55. May be involved in cell growth and differentiation. Acts as a negative growth regulator. Required for the exosomal release of SDCBP, CD63 and syndecan. It may also play a role in the extracellular release of microvesicles that differ from the exosomes. The sequence is that of Tumor susceptibility gene 101 protein (Tsg101) from Rattus norvegicus (Rat).